A 435-amino-acid polypeptide reads, in one-letter code: Dual specificity mitogen-activated protein kinase kinase jkk-1 (435 aa).

The span at 35-49 shows a compositional bias: basic and acidic residues; it reads RDRRSTSVDQKHKEC. The interval 35-90 is disordered; that stretch reads RDRRSTSVDQKHKECSSTSSSPQHQRPNNIGYLTSPMERKFTPLSMKPSPSRRDTE. A compositionally biased stretch (polar residues) spans 50 to 66; that stretch reads SSTSSSPQHQRPNNIGY. The Protein kinase domain occupies 122–385; that stretch reads IHIISLLGSG…YRQLMKHDFY (264 aa). ATP-binding positions include 128 to 136 and K149; that span reads LGSGSCGVV. D246 (proton acceptor) is an active-site residue.

This sequence belongs to the protein kinase superfamily. STE Ser/Thr protein kinase family. MAP kinase kinase subfamily. Interacts with unc-16. It depends on Mg(2+) as a cofactor. In terms of tissue distribution, expressed in most neurons, including nerve ring, head ganglions, dorsal and ventral nerve cords and tail ganglions.

Its subcellular location is the cytoplasm. The protein localises to the perikaryon. It localises to the cell projection. It is found in the axon. The catalysed reaction is L-seryl-[protein] + ATP = O-phospho-L-seryl-[protein] + ADP + H(+). It catalyses the reaction L-threonyl-[protein] + ATP = O-phospho-L-threonyl-[protein] + ADP + H(+). The enzyme catalyses L-tyrosyl-[protein] + ATP = O-phospho-L-tyrosyl-[protein] + ADP + H(+). Functionally, dual specificity protein kinase which acts as an essential component of the JNK signal transduction pathway. May phosphorylate jnk-1. Plays a role in coordinating locomotion via D-type GABAergic motoneurons and in regulating synaptic vesicle transport downstream of adapter protein unc-16 and probably by activating jnk-1. Positively regulates lifespan. Upon environmental stress such as heat stress regulates daf-16 nuclear translocation probably by activating jnk-1. Regulates germline cell apoptosis in response to heavy metals such as Cu(2+) and to arsenite. In Caenorhabditis elegans, this protein is Dual specificity mitogen-activated protein kinase kinase jkk-1.